The sequence spans 185 residues: MATTKHLALAILVLLSIGMTTSARTLLGYGPGGGGGGGGGGEGGGGGYGGSGYGSGSGYGEGGGSGGAAGGGYGRGGGGGGGGGEGGGSGSGYGSGQGSGYGAGVGGAGGYGSGGGGGGGQGGGAGGYGQGSGYGSGYGSGAGGAHGGGYGSGGGGGGGGGQGGGSGSGSGSGYGSGSGGGNGHH.

Positions 1 to 27 (MATTKHLALAILVLLSIGMTTSARTLL) are cleaved as a signal peptide. Residues 149-185 (GYGSGGGGGGGGGQGGGSGSGSGSGYGSGSGGGNGHH) are disordered.

The protein localises to the secreted. It localises to the cell wall. Its function is as follows. Responsible for plasticity of the cell wall. This is Glycine-rich cell wall structural protein 2 (GRP0.9) from Oryza sativa subsp. indica (Rice).